We begin with the raw amino-acid sequence, 513 residues long: DNA damage-binding protein CMR1 (513 aa).

The segment covering 35 to 45 (RSEAGIEDHRK) has biased composition (basic and acidic residues). The segment at 35-103 (RSEAGIEDHR…TAQNVKQEEE (69 aa)) is disordered. WD repeat units follow at residues 183–224 (IVHE…PDPE), 237–277 (LFSR…SDEL), 329–369 (LSDK…AKPD), 386–425 (NSRLSVSAVSYAPIDHTLVCNGYDNTVRLFNARADLPSEL), 438–477 (GRWVSVLKARFKLNMDVFAIANMKRAIDIYTSRGEQLSHL), and 478–513 (ETSTVPAVVSWHPMQNWIVGGNNSGKVFLFTDAPQE).

This sequence belongs to the WD repeat DDB2/WDR76 family.

DNA-binding protein that binds to both single- and double-stranded DNA. Binds preferentially to UV-damaged DNA. May be involved in DNA-metabolic processes. The polypeptide is DNA damage-binding protein CMR1 (Eremothecium gossypii (strain ATCC 10895 / CBS 109.51 / FGSC 9923 / NRRL Y-1056) (Yeast)).